Consider the following 877-residue polypeptide: Potassium transporter 23 (877 aa).

Disordered stretches follow at residues 1-60 (MDDD…SLDG) and 72-92 (ASAGGASGGGGGGGPLSRASS). Residues 1–126 (MDDDDSGIQE…RGAHGHSSKE (126 aa)) are Cytoplasmic-facing. Residues 12–28 (PAPPPPPPPPPPPPPPL) are compositionally biased toward pro residues. A compositionally biased stretch (gly residues) spans 76 to 86 (GASGGGGGGGP). The helical transmembrane segment at 127–147 (ISMLSTVAMAFQTLGVVYGDM) threads the bilayer. Residues 148-173 (GTSPLYVFSDVFSKVPIKSEVEILGA) are Extracellular-facing. The chain crosses the membrane as a helical span at residues 174–194 (LSLVMYTIALIPFAKYVFIVL). Topologically, residues 195-260 (KANDNGEGGT…SLEKNPVFKN (66 aa)) are cytoplasmic. A helical transmembrane segment spans residues 261-281 (ILLFLVLMGTSMVIGDGILTP). The Extracellular segment spans residues 282–295 (SMSVMSAVSGLQGR). Residues 296–316 (VPGFGTDAVVIVSILFLVLLF) form a helical membrane-spanning segment. Residues 317 to 325 (SVQRFGTGK) lie on the Cytoplasmic side of the membrane. Residues 326 to 346 (VGFMFAPILALWFINLGTIGI) form a helical membrane-spanning segment. The Extracellular segment spans residues 347–379 (YNLAKYDISVVRAFNPVYIYLFFQTNGIKAWSA). A helical transmembrane segment spans residues 380–400 (LGGCVLCITGAEAMFADLGHF). Residues 401–406 (SVKSIQ) are Cytoplasmic-facing. A helical transmembrane segment spans residues 407-427 (VAFTAVVFPCLLIAYMGQAAY). Residues 428–441 (LMKYPFAVERIFYD) are Extracellular-facing. The helical transmembrane segment at 442 to 462 (SVPEILFWPVFVIATLAAMIA) threads the bilayer. Residues 463 to 498 (SQAMISATFSCIKQAMALGCFPRIKIIHTSKKVMGQ) lie on the Cytoplasmic side of the membrane. The helical transmembrane segment at 499–519 (IYIPVMNWFLMVMCIIIVATF) threads the bilayer. At 520–524 (RSTND) the chain is on the extracellular side. Residues 525-545 (IANAYGIAEVGVMMVSTALVT) traverse the membrane as a helical segment. Residues 546-555 (LVMLLIWQTN) lie on the Cytoplasmic side of the membrane. A helical transmembrane segment spans residues 556–578 (LFLVMCFPVIFGSVEFVYLTAVL). The Extracellular segment spans residues 579 to 583 (SKIQE). Residues 584-604 (GGWLPLAFSSLFLCIMYTWNY) form a helical membrane-spanning segment. Residues 605–877 (GSVLKYQSEM…IMRVGMTYMV (273 aa)) are Cytoplasmic-facing.

This sequence belongs to the HAK/KUP transporter (TC 2.A.72.3) family.

The protein resides in the membrane. Its function is as follows. High-affinity potassium transporter. The chain is Potassium transporter 23 (HAK23) from Oryza sativa subsp. japonica (Rice).